The primary structure comprises 327 residues: MSERHLPDDQSSTIDPYLITSVRQTLAEQSAALQNLSKQLDSGQYQRVLNLIMNCKGHVILSGMGKSGHVGRKMSATLASTGTPSFFIHPAEAFHGDLGMITPYDLLILISASGETDEILKLVPSLKNFGNRIIAITNNGNSTLAKNADAVLELHMANETCPNNLAPTTSTTLTMAIGDALAIAMIHQRKFMPNDFARYHPGGSLGRRLLTRVADVMQHDVPAVQLDASFKTVIQRITSGCQGMVMVEDAEGGLAGIITDGDLRRFMEKEDSLTSATAAQMMTREPLTLPEDTMIIEAEEKMQKHRVSTLLVTNKANKVTGLVRIFD.

Residues 48–191 form the SIS domain; sequence VLNLIMNCKG…AIAMIHQRKF (144 aa). 63–68 is a binding site for ATP; sequence GMGKSG. Substrate-binding positions include 82–83, His89, His95, 121–130, and 155–157; these read GT, KLVPSLKNFG, and HMA. Position 89 (His89) interacts with Zn(2+). CBS domains lie at 217–273 and 282–327; these read MQHD…EDSL and MTRE…RIFD.

Belongs to the SIS family. GutQ/KpsF subfamily. As to quaternary structure, homotetramer.

It catalyses the reaction D-arabinose 5-phosphate = D-ribulose 5-phosphate. Its function is as follows. Involved in the biosynthesis of K-antigen capsules. Catalyzes the reversible aldol-ketol isomerization between D-ribulose 5-phosphate (Ru5P) and D-arabinose 5-phosphate (A5P). The polypeptide is Arabinose 5-phosphate isomerase KpsF (kpsF) (Escherichia coli).